Reading from the N-terminus, the 115-residue chain is Con-Ins G1a (115 aa).

The N-terminal stretch at 1–24 (MTTSSYFLLMALGLLLYVCQSSFG) is a signal peptide. A propeptide spanning residues 25 to 29 (NQHTR) is cleaved from the precursor. Proline 34 is modified (4-hydroxyproline; partial). Cystine bridges form between cysteine 38–cysteine 101, cysteine 50–cysteine 114, and cysteine 100–cysteine 105. Residue glutamate 41 is modified to 4-carboxyglutamate. A propeptide spans 53-94 (KRNDAGEKRGRASPLWQRRGSLSKLKARAKRNGAFHLPRDGR) (c peptide). Glutamate 98 is modified (4-carboxyglutamate). Proline 104 carries the post-translational modification 4-hydroxyproline; partial. At glutamate 109 the chain carries 4-carboxyglutamate; partial. Cysteine 114 is subject to Cysteine amide.

The protein belongs to the insulin family. In terms of assembly, heterodimer of A and B chains; disulfide-linked. As to expression, expressed by the venom gland.

Its subcellular location is the secreted. Its function is as follows. This venom insulin, from a fish-hunting cone snail, facilitates prey capture by rapidly inducing hypoglycemic shock. It is one of the smallest known insulin found in nature and lacks the C-terminal segment of the B chain that, in human insulin, mediates engagement of the insulin receptor (INSR) and assembly of the hormone's hexameric storage form. Despite lacking this segment, it both binds and activates human insulin receptor (long isoform (HIR-B)) with a high potency (EC(50)=16.28 nM). In vivo, intraperitoneal injection of this peptide into zebrafish lowers blood glucose with the same potency than human insulin. In addition, when applied to water, this peptide reduces overall locomotor activity of zebrafish larvae, observed as a significant decrease in the percentage of time spent swimming and movement frequency. When tested on a mouse model of diabetes, this insulin also lowers blood glucose with a 10-fold lower potency than human insulin. This Conus geographus (Geography cone) protein is Con-Ins G1a.